The chain runs to 255 residues: 5-oxoprolinase subunit A (255 aa).

Belongs to the LamB/PxpA family. In terms of assembly, forms a complex composed of PxpA, PxpB and PxpC.

The enzyme catalyses 5-oxo-L-proline + ATP + 2 H2O = L-glutamate + ADP + phosphate + H(+). Catalyzes the cleavage of 5-oxoproline to form L-glutamate coupled to the hydrolysis of ATP to ADP and inorganic phosphate. The chain is 5-oxoprolinase subunit A from Pyrococcus horikoshii (strain ATCC 700860 / DSM 12428 / JCM 9974 / NBRC 100139 / OT-3).